A 529-amino-acid chain; its full sequence is Interleukin-21 receptor (529 aa).

Residues Met-1 to Ser-19 form the signal peptide. 3 disulfides stabilise this stretch: Cys-20-Cys-109, Cys-25-Cys-35, and Cys-65-Cys-81. At Cys-20 to His-237 the chain is on the extracellular side. 2 consecutive Fibronectin type-III domains span residues Leu-21–Ile-118 and Lys-119–Gly-228. Residues Asn-73, Asn-97, Asn-104, Asn-125, and Asn-182 are each glycosylated (N-linked (GlcNAc...) asparagine). Residue Trp-214 is glycosylated (C-linked (Man) tryptophan). The WSXWS motif signature appears at Trp-214–Ser-218. Residues Met-238–Leu-258 form a helical membrane-spanning segment. Residues Pro-259–Ser-529 lie on the Cytoplasmic side of the membrane. Positions Ile-266–Glu-274 match the Box 1 motif motif. The segment at Thr-458–Ser-529 is disordered.

This sequence belongs to the type I cytokine receptor family. Type 4 subfamily. In terms of assembly, heterodimer with the common gamma subunit. Associates with JAK1. C-mannosylated at Trp-214 in the WSXWS motif, the sugar chain makes extensive hydrogen bonds with Asn-73 sugar, and bridges the two fibronectin domains transforming the V-shaped receptor into an A-frame. Selectively expressed in lymphoid tissues. Most highly expressed in thymus and spleen.

It localises to the membrane. Its function is as follows. This is a receptor for interleukin-21. The polypeptide is Interleukin-21 receptor (Il21r) (Mus musculus (Mouse)).